We begin with the raw amino-acid sequence, 562 residues long: TBC1 domain family member 24 (562 aa).

Residues K36, R40, K238, R242, and 293-297 (RLFSR) each bind a 1,2-diacyl-sn-glycero-3-phospho-(1D-myo-inositol). The 218-residue stretch at 42–259 (GHWAKSHTLR…FFHKVRGGQP (218 aa)) folds into the Rab-GAP TBC domain. The TLDc domain maps to 337-549 (EIVSVKEMRD…ISIIEVWGFK (213 aa)). The segment at 450 to 471 (NSSSADKEANSSQSDKDGIDPS) is disordered. Basic and acidic residues predominate over residues 454–468 (ADKEANSSQSDKDGI).

Interacts with ARF6.

The protein localises to the cell membrane. The protein resides in the cytoplasm. It localises to the cytoplasmic vesicle membrane. Its subcellular location is the presynapse. Functionally, may act as a GTPase-activating protein for Rab family protein(s). Involved in neuronal projections development, probably through a negative modulation of ARF6 function. Involved in the regulation of synaptic vesicle trafficking. This chain is TBC1 domain family member 24 (tbc1d24), found in Xenopus laevis (African clawed frog).